We begin with the raw amino-acid sequence, 257 residues long: 5'-nucleotidase SurE (257 aa).

A divalent metal cation is bound by residues Asp-8, Asp-9, Ser-40, and Asn-92.

Belongs to the SurE nucleotidase family. Requires a divalent metal cation as cofactor.

It localises to the cytoplasm. It catalyses the reaction a ribonucleoside 5'-phosphate + H2O = a ribonucleoside + phosphate. In terms of biological role, nucleotidase that shows phosphatase activity on nucleoside 5'-monophosphates. This chain is 5'-nucleotidase SurE, found in Rhizobium leguminosarum bv. trifolii (strain WSM2304).